Consider the following 282-residue polypeptide: Succinate dehydrogenase [ubiquinone] iron-sulfur subunit, mitochondrial (282 aa).

In terms of domain architecture, 2Fe-2S ferredoxin-type spans 43–131; that stretch reads YRFNPEAPGA…STKIYPLPHM (89 aa). Residues Cys91, Cys96, Cys99, and Cys111 each coordinate [2Fe-2S] cluster. Residues 174 to 204 form the 4Fe-4S ferredoxin-type domain; the sequence is ERDRLDGLYECILCACCSTSCPSYWWNADKY. Cys184, Cys187, and Cys190 together coordinate [4Fe-4S] cluster. Cys194 is a binding site for [3Fe-4S] cluster. Residue Trp199 coordinates a ubiquinone. [3Fe-4S] cluster contacts are provided by Cys241 and Cys247. Cys251 contributes to the [4Fe-4S] cluster binding site.

Belongs to the succinate dehydrogenase/fumarate reductase iron-sulfur protein family. Component of complex II composed of four subunits: a flavoprotein (FP), an iron-sulfur protein (IP), and a cytochrome b composed of a large and a small subunit. It depends on [2Fe-2S] cluster as a cofactor. The cofactor is [3Fe-4S] cluster. [4Fe-4S] cluster is required as a cofactor.

Its subcellular location is the mitochondrion inner membrane. It carries out the reaction a quinone + succinate = fumarate + a quinol. Its pathway is carbohydrate metabolism; tricarboxylic acid cycle; fumarate from succinate (eukaryal route): step 1/1. Functionally, iron-sulfur protein (IP) subunit of succinate dehydrogenase (SDH) that is involved in complex II of the mitochondrial electron transport chain and is responsible for transferring electrons from succinate to ubiquinone (coenzyme Q). In Caenorhabditis briggsae, this protein is Succinate dehydrogenase [ubiquinone] iron-sulfur subunit, mitochondrial.